Consider the following 145-residue polypeptide: 3-hydroxyacyl-[acyl-carrier-protein] dehydratase FabZ (145 aa).

Residue His47 is part of the active site.

The protein belongs to the thioester dehydratase family. FabZ subfamily.

It localises to the cytoplasm. The catalysed reaction is a (3R)-hydroxyacyl-[ACP] = a (2E)-enoyl-[ACP] + H2O. Its function is as follows. Involved in unsaturated fatty acids biosynthesis. Catalyzes the dehydration of short chain beta-hydroxyacyl-ACPs and long chain saturated and unsaturated beta-hydroxyacyl-ACPs. The protein is 3-hydroxyacyl-[acyl-carrier-protein] dehydratase FabZ of Chromohalobacter salexigens (strain ATCC BAA-138 / DSM 3043 / CIP 106854 / NCIMB 13768 / 1H11).